Reading from the N-terminus, the 557-residue chain is Putative inactive polypeptide N-acetylgalactosaminyltransferase 11 (557 aa).

Residues methionine 1–leucine 4 lie on the Cytoplasmic side of the membrane. Residues leucine 5 to tryptophan 27 traverse the membrane as a helical; Signal-anchor for type II membrane protein segment. The Lumenal segment spans residues phenylalanine 28 to histidine 557. Asparagine 33 and asparagine 103 each carry an N-linked (GlcNAc...) asparagine glycan. Intrachain disulfides connect cysteine 99–cysteine 325, cysteine 316–cysteine 397, cysteine 437–cysteine 450, cysteine 472–cysteine 486, and cysteine 511–cysteine 526. Residues threonine 109–proline 215 form a catalytic subdomain A region. Asparagine 220 is a glycosylation site (N-linked (GlcNAc...) asparagine). The segment at proline 271 to lysine 333 is catalytic subdomain B. N-linked (GlcNAc...) asparagine glycosylation occurs at asparagine 379. A Ricin B-type lectin domain is found at glutamate 456–histidine 557.

The protein belongs to the glycosyltransferase 2 family. GalNAc-T subfamily.

Its subcellular location is the golgi apparatus membrane. In terms of biological role, probable inactive glycosyltransferase. This is Putative inactive polypeptide N-acetylgalactosaminyltransferase 11 from Drosophila melanogaster (Fruit fly).